The sequence spans 1025 residues: Collagen alpha-1(VI) chain (1025 aa).

The N-terminal stretch at 1-19 (MRLAHALLPLLLQACWVAT) is a signal peptide. Positions 20-255 (QDIQGSKAIA…CCSFECQAAR (236 aa)) are N-terminal globular domain. The VWFA 1 domain occupies 36–234 (DLFFVLDTSE…EVISQTIDTI (199 aa)). An N-linked (GlcNAc...) asparagine glycan is attached at Asn-211. A disordered region spans residues 252-588 (QAARGPPGPR…QGPPGHVGPP (337 aa)). The tract at residues 256–591 (GPPGPRGDPG…PGHVGPPGPD (336 aa)) is triple-helical region. A Cell attachment site motif is present at residues 261-263 (RGD). 2 stretches are compositionally biased toward basic and acidic residues: residues 267-284 (EGER…EAGD) and 300-333 (KGEK…DGMK). 2 consecutive short sequence motifs (cell attachment site) follow at residues 441–443 (RGD) and 477–479 (RGD). Residues Asn-515 and Asn-536 are each glycosylated (N-linked (GlcNAc...) asparagine). A compositionally biased stretch (acidic residues) spans 549–559 (GEVGDPGEDNN). Pro residues predominate over residues 578-588 (PQGPPGHVGPP). Positions 592–1025 (ECEILDIIMK…QTVSRKVALG (434 aa)) are C-terminal globular domain. 2 consecutive VWFA domains span residues 614–802 (DILF…LKNI) and 826–1018 (DITI…YQTV). N-linked (GlcNAc...) asparagine glycans are attached at residues Asn-801 and Asn-893.

This sequence belongs to the type VI collagen family. Trimers composed of three different chains: alpha-1(VI), alpha-2(VI), and alpha-3(VI) or alpha-4(VI) or alpha-5(VI) or alpha-6(VI). In terms of processing, prolines at the third position of the tripeptide repeating unit (G-X-Y) are hydroxylated in some or all of the chains.

It is found in the secreted. Its subcellular location is the extracellular space. The protein resides in the extracellular matrix. Functionally, collagen VI acts as a cell-binding protein. The polypeptide is Collagen alpha-1(VI) chain (Col6a1) (Mus musculus (Mouse)).